The chain runs to 215 residues: GTP-binding nuclear protein ran-1 (215 aa).

In terms of domain architecture, Small GTPase Ran-type spans 6–170 (GIPTFKLVLV…LWLARKLLGD (165 aa)). GTP is bound at residue 17-24 (DGGTGKTT). Residues 36–44 (KKYVATLGV) form a switch-I region. Residues Gly-67, 121-124 (NKVD), and 149-151 (SAK) contribute to the GTP site. Positions 67–83 (GQEKFGGLRDGYYIQGQ) are switch-II.

Belongs to the small GTPase superfamily. Ran family. In terms of assembly, found in a nuclear export complex with RanGTP, exportin and pre-miRNA.

Its subcellular location is the nucleus. The protein resides in the chromosome. It is found in the centromere. The protein localises to the kinetochore. Ran GTPase system comprises ran-1, ran-2 and ran-3 and is essential in nucleocytoplasmic transport. Ran-1 is a GTP-binding protein that mediates the interaction between mitotic chromosomes and kinetochore microtubules. Plays a crucial role in nuclear envelope assembly at the end of each cell division. Required for the import of protein into the nucleus and also for RNA export. RCC1 (ran-3)/Ran (ran-1) complex (together with other proteins) acts as a component of a signal transmission pathway that detects unreplicated DNA. The chain is GTP-binding nuclear protein ran-1 (ran-1) from Caenorhabditis elegans.